The primary structure comprises 386 residues: Glucose-1-phosphate adenylyltransferase (386 aa).

Residues tyrosine 100, glycine 165, 180–181 (EK), and serine 191 contribute to the alpha-D-glucose 1-phosphate site.

The protein belongs to the bacterial/plant glucose-1-phosphate adenylyltransferase family. As to quaternary structure, homotetramer.

It catalyses the reaction alpha-D-glucose 1-phosphate + ATP + H(+) = ADP-alpha-D-glucose + diphosphate. The protein operates within glycan biosynthesis; glycogen biosynthesis. Involved in the biosynthesis of ADP-glucose, a building block required for the elongation reactions to produce glycogen. Catalyzes the reaction between ATP and alpha-D-glucose 1-phosphate (G1P) to produce pyrophosphate and ADP-Glc. In Clostridium beijerinckii (strain ATCC 51743 / NCIMB 8052) (Clostridium acetobutylicum), this protein is Glucose-1-phosphate adenylyltransferase.